The chain runs to 237 residues: U2 small nuclear ribonucleoprotein A' (237 aa).

LRR repeat units lie at residues 53-74 (RTNIVDFTNNELEELPPLGHND), 75-95 (TVHTLLLSRNRLGRLDASRLP), and 97-118 (YLVNLNLAMNRFEKFEQLQGLR). One can recognise an LRRCT domain in the interval 132–170 (NVICHKEQYRETVIALCPQLAVLDGERVRQAERQAAPQN). The tract at residues 161–182 (QAERQAAPQNEKTDTPTEGPQP) is disordered.

The protein belongs to the U2 small nuclear ribonucleoprotein A family. As to quaternary structure, associated with the spliceosome.

Its subcellular location is the nucleus. In terms of biological role, involved in pre-mRNA splicing. In Eremothecium gossypii (strain ATCC 10895 / CBS 109.51 / FGSC 9923 / NRRL Y-1056) (Yeast), this protein is U2 small nuclear ribonucleoprotein A' (LEA1).